A 259-amino-acid chain; its full sequence is UPF0246 protein VF_2109 (259 aa).

Belongs to the UPF0246 family.

This Aliivibrio fischeri (strain ATCC 700601 / ES114) (Vibrio fischeri) protein is UPF0246 protein VF_2109.